The sequence spans 340 residues: MTNKNAYAQSGVDVEAGYEVVERIKKHVARTERAGVMGALGGFGGMFDLSKTGVKEPVLISGTDGVGTKLMLAIKYDKHDTIGQDCVAMCVNDIIAAGAEPLYFLDYVATGKNEPAKLEQVVAGVAEGCVQAGAALIGGETAEMPGMYGEDDYDLAGFAVGVAEKSQIIDGSKVVEGDVLLGLASSGLHSNGYSLVRRVFADYTGEEVLPELEGKKLKEVLLEPTRIYVKAVLPLIKEELVNGIAHITGGGFIENVPRMFADDLAAEIDESKVPVLPIFKALEKYGQIKHEEMFEIFNMGVGLMLAVSPENVERVKELLDEAVYEIGRIVKKENESVIIK.

The protein belongs to the AIR synthase family.

The protein resides in the cytoplasm. The enzyme catalyses 2-formamido-N(1)-(5-O-phospho-beta-D-ribosyl)acetamidine + ATP = 5-amino-1-(5-phospho-beta-D-ribosyl)imidazole + ADP + phosphate + H(+). It functions in the pathway purine metabolism; IMP biosynthesis via de novo pathway; 5-amino-1-(5-phospho-D-ribosyl)imidazole from N(2)-formyl-N(1)-(5-phospho-D-ribosyl)glycinamide: step 2/2. This chain is Phosphoribosylformylglycinamidine cyclo-ligase, found in Streptococcus pneumoniae (strain Taiwan19F-14).